The sequence spans 469 residues: 1-aminocyclopropane-1-carboxylate synthase 8 (469 aa).

Residues E47 and Y85 each contribute to the substrate site. K272 bears the N6-(pyridoxal phosphate)lysine mark.

It belongs to the class-I pyridoxal-phosphate-dependent aminotransferase family. Homodimer and heterodimer. In vivo, the relevance of heterodimerization with other ACS enzymes is however unsure. Interacts with GRF3. Pyridoxal 5'-phosphate serves as cofactor. May be processed at its C-terminus. In terms of tissue distribution, expressed in roots. Expressed at low level in flowers and siliques.

The catalysed reaction is S-adenosyl-L-methionine = 1-aminocyclopropane-1-carboxylate + S-methyl-5'-thioadenosine + H(+). Its pathway is alkene biosynthesis; ethylene biosynthesis via S-adenosyl-L-methionine; ethylene from S-adenosyl-L-methionine: step 1/2. In terms of biological role, 1-aminocyclopropane-1-carboxylate synthase (ACS) enzymes catalyze the conversion of S-adenosyl-L-methionine (SAM) into 1-aminocyclopropane-1-carboxylate (ACC), a direct precursor of ethylene. The protein is 1-aminocyclopropane-1-carboxylate synthase 8 (ACS8) of Arabidopsis thaliana (Mouse-ear cress).